The chain runs to 1347 residues: Spermatogenesis-associated protein 31A1 (1347 aa).

A helical transmembrane segment spans residues 23 to 43 (PWVLDIFLTLVFALGFFFLLL). 6 disordered regions span residues 55–89 (PSPS…ECPR), 106–235 (GPHL…STLI), 373–397 (EQDT…GPQK), 628–658 (DESP…EAQK), 899–955 (PRGI…REAV), and 1085–1160 (HEEP…PPSV). Positions 60–82 (GKRKCPVGRRRRPRGRMKNHSLR) are enriched in basic residues. Residues 165–178 (LASTPSPGPMTTSV) are compositionally biased toward polar residues. The segment covering 198-222 (PEPPALFPHPPHTPDPLACSPPPPK) has biased composition (pro residues). Polar residues-rich tracts occupy residues 631-651 (PGTS…STGE) and 927-948 (LTYS…SSKA). Composition is skewed to basic and acidic residues over residues 1108 to 1127 (HKSE…RLEG) and 1137 to 1146 (RKTEDTHQDE).

The protein belongs to the SPATA31 family.

It localises to the membrane. May play a role in spermatogenesis. This chain is Spermatogenesis-associated protein 31A1, found in Homo sapiens (Human).